We begin with the raw amino-acid sequence, 382 residues long: Queuine tRNA-ribosyltransferase (382 aa).

D96 (proton acceptor) is an active-site residue. Residues 96–100, D151, Q194, and G221 contribute to the substrate site; that span reads DSGGF. The tract at residues 252–258 is RNA binding; the sequence is GVGAPDS. Residue D271 is the Nucleophile of the active site. The interval 276–280 is RNA binding; important for wobble base 34 recognition; that stretch reads TRIAR. Positions 309, 311, 314, and 340 each coordinate Zn(2+).

Belongs to the queuine tRNA-ribosyltransferase family. As to quaternary structure, homodimer. Within each dimer, one monomer is responsible for RNA recognition and catalysis, while the other monomer binds to the replacement base PreQ1. The cofactor is Zn(2+).

The enzyme catalyses 7-aminomethyl-7-carbaguanine + guanosine(34) in tRNA = 7-aminomethyl-7-carbaguanosine(34) in tRNA + guanine. It functions in the pathway tRNA modification; tRNA-queuosine biosynthesis. Catalyzes the base-exchange of a guanine (G) residue with the queuine precursor 7-aminomethyl-7-deazaguanine (PreQ1) at position 34 (anticodon wobble position) in tRNAs with GU(N) anticodons (tRNA-Asp, -Asn, -His and -Tyr). Catalysis occurs through a double-displacement mechanism. The nucleophile active site attacks the C1' of nucleotide 34 to detach the guanine base from the RNA, forming a covalent enzyme-RNA intermediate. The proton acceptor active site deprotonates the incoming PreQ1, allowing a nucleophilic attack on the C1' of the ribose to form the product. After dissociation, two additional enzymatic reactions on the tRNA convert PreQ1 to queuine (Q), resulting in the hypermodified nucleoside queuosine (7-(((4,5-cis-dihydroxy-2-cyclopenten-1-yl)amino)methyl)-7-deazaguanosine). This Lactococcus lactis subsp. lactis (strain IL1403) (Streptococcus lactis) protein is Queuine tRNA-ribosyltransferase.